The following is a 347-amino-acid chain: uncharacterized protein (347 aa).

The Cytoplasmic segment spans residues methionine 1–histidine 44. The helical; Signal-anchor for type II membrane protein transmembrane segment at leucine 45–leucine 62 threads the bilayer. At lysine 63–leucine 347 the chain is on the lumenal side.

Belongs to the glycosyltransferase 34 family.

It is found in the endoplasmic reticulum membrane. This is an uncharacterized protein from Schizosaccharomyces pombe (strain 972 / ATCC 24843) (Fission yeast).